We begin with the raw amino-acid sequence, 154 residues long: Crossover junction endodeoxyribonuclease RuvC (154 aa).

Active-site residues include D7, E67, and D139. 3 residues coordinate Mg(2+): D7, E67, and D139.

The protein belongs to the RuvC family. As to quaternary structure, homodimer which binds Holliday junction (HJ) DNA. The HJ becomes 2-fold symmetrical on binding to RuvC with unstacked arms; it has a different conformation from HJ DNA in complex with RuvA. In the full resolvosome a probable DNA-RuvA(4)-RuvB(12)-RuvC(2) complex forms which resolves the HJ. Mg(2+) serves as cofactor.

The protein resides in the cytoplasm. It carries out the reaction Endonucleolytic cleavage at a junction such as a reciprocal single-stranded crossover between two homologous DNA duplexes (Holliday junction).. The RuvA-RuvB-RuvC complex processes Holliday junction (HJ) DNA during genetic recombination and DNA repair. Endonuclease that resolves HJ intermediates. Cleaves cruciform DNA by making single-stranded nicks across the HJ at symmetrical positions within the homologous arms, yielding a 5'-phosphate and a 3'-hydroxyl group; requires a central core of homology in the junction. The consensus cleavage sequence is 5'-(A/T)TT(C/G)-3'. Cleavage occurs on the 3'-side of the TT dinucleotide at the point of strand exchange. HJ branch migration catalyzed by RuvA-RuvB allows RuvC to scan DNA until it finds its consensus sequence, where it cleaves and resolves the cruciform DNA. In Synechococcus sp. (strain WH7803), this protein is Crossover junction endodeoxyribonuclease RuvC.